Consider the following 94-residue polypeptide: Co-chaperonin GroES (94 aa).

It belongs to the GroES chaperonin family. In terms of assembly, heptamer of 7 subunits arranged in a ring. Interacts with the chaperonin GroEL.

The protein localises to the cytoplasm. Its function is as follows. Together with the chaperonin GroEL, plays an essential role in assisting protein folding. The GroEL-GroES system forms a nano-cage that allows encapsulation of the non-native substrate proteins and provides a physical environment optimized to promote and accelerate protein folding. GroES binds to the apical surface of the GroEL ring, thereby capping the opening of the GroEL channel. This Lactiplantibacillus plantarum (strain ATCC BAA-793 / NCIMB 8826 / WCFS1) (Lactobacillus plantarum) protein is Co-chaperonin GroES.